The chain runs to 121 residues: Non-specific lipid-transfer protein 3 (121 aa).

The N-terminal stretch at 1-28 (MAGARRTMALVALVAVVAAAVVAERASA) is a signal peptide. 4 disulfide bridges follow: C32–C80, C42–C57, C58–C103, and C78–C117.

Belongs to the plant LTP family.

Its function is as follows. Plant non-specific lipid-transfer proteins transfer phospholipids as well as galactolipids across membranes. May play a role in wax or cutin deposition in the cell walls of expanding epidermal cells and certain secretory tissues. May possess an antifungal activity and protect the plant against pathogens. This is Non-specific lipid-transfer protein 3 (LTP110-A) from Oryza sativa subsp. indica (Rice).